A 324-amino-acid polypeptide reads, in one-letter code: Acetyl-coenzyme A carboxylase carboxyl transferase subunit alpha (324 aa).

The region spanning 37–291 (KLEKRLDKLK…REFIIQEWLR (255 aa)) is the CoA carboxyltransferase C-terminal domain.

This sequence belongs to the AccA family. Acetyl-CoA carboxylase is a heterohexamer composed of biotin carboxyl carrier protein (AccB), biotin carboxylase (AccC) and two subunits each of ACCase subunit alpha (AccA) and ACCase subunit beta (AccD).

The protein localises to the cytoplasm. It carries out the reaction N(6)-carboxybiotinyl-L-lysyl-[protein] + acetyl-CoA = N(6)-biotinyl-L-lysyl-[protein] + malonyl-CoA. It functions in the pathway lipid metabolism; malonyl-CoA biosynthesis; malonyl-CoA from acetyl-CoA: step 1/1. Component of the acetyl coenzyme A carboxylase (ACC) complex. First, biotin carboxylase catalyzes the carboxylation of biotin on its carrier protein (BCCP) and then the CO(2) group is transferred by the carboxyltransferase to acetyl-CoA to form malonyl-CoA. This chain is Acetyl-coenzyme A carboxylase carboxyl transferase subunit alpha, found in Chlamydia pneumoniae (Chlamydophila pneumoniae).